The sequence spans 252 residues: Cytochrome c oxidase subunit 2 (252 aa).

Residues 1 to 39 (MFLIMLKGHILMDAPTPWGIFFQDSASPQMEGIMELHNN) are Mitochondrial intermembrane-facing. A helical transmembrane segment spans residues 40–59 (IMFYLAIILFTVTWMMITII). At 60-81 (RNFVAKKSPIAHKYMNHGTLIE) the chain is on the mitochondrial matrix side. The helical transmembrane segment at 82 to 105 (LIWTITPAFILILIAFPSFKLLYL) threads the bilayer. At 106–252 (MDEVMDPSLV…LLWLRDQMEG (147 aa)) the chain is on the mitochondrial intermembrane side. Residues His184, Cys219, Glu221, Cys223, His227, and Met230 each contribute to the Cu cation site. Mg(2+) is bound at residue Glu221.

This sequence belongs to the cytochrome c oxidase subunit 2 family. Component of the cytochrome c oxidase (complex IV, CIV), a multisubunit enzyme composed of a catalytic core of 3 subunits and several supernumerary subunits. The complex exists as a monomer or a dimer and forms supercomplexes (SCs) in the inner mitochondrial membrane with ubiquinol-cytochrome c oxidoreductase (cytochrome b-c1 complex, complex III, CIII). Cu cation serves as cofactor.

Its subcellular location is the mitochondrion inner membrane. It carries out the reaction 4 Fe(II)-[cytochrome c] + O2 + 8 H(+)(in) = 4 Fe(III)-[cytochrome c] + 2 H2O + 4 H(+)(out). In terms of biological role, component of the cytochrome c oxidase, the last enzyme in the mitochondrial electron transport chain which drives oxidative phosphorylation. The respiratory chain contains 3 multisubunit complexes succinate dehydrogenase (complex II, CII), ubiquinol-cytochrome c oxidoreductase (cytochrome b-c1 complex, complex III, CIII) and cytochrome c oxidase (complex IV, CIV), that cooperate to transfer electrons derived from NADH and succinate to molecular oxygen, creating an electrochemical gradient over the inner membrane that drives transmembrane transport and the ATP synthase. Cytochrome c oxidase is the component of the respiratory chain that catalyzes the reduction of oxygen to water. Electrons originating from reduced cytochrome c in the intermembrane space (IMS) are transferred via the dinuclear copper A center (CU(A)) of subunit 2 and heme A of subunit 1 to the active site in subunit 1, a binuclear center (BNC) formed by heme A3 and copper B (CU(B)). The BNC reduces molecular oxygen to 2 water molecules using 4 electrons from cytochrome c in the IMS and 4 protons from the mitochondrial matrix. The sequence is that of Cytochrome c oxidase subunit 2 (cox2) from Emericella nidulans (Aspergillus nidulans).